The sequence spans 305 residues: Lipoyl synthase (305 aa).

[4Fe-4S] cluster-binding residues include Cys-41, Cys-46, Cys-52, Cys-68, Cys-72, Cys-75, and Ser-281. In terms of domain architecture, Radical SAM core spans Gly-54 to Lys-270. Positions His-283 to Gln-298 are enriched in basic and acidic residues. The tract at residues His-283 to Ser-305 is disordered.

The protein belongs to the radical SAM superfamily. Lipoyl synthase family. [4Fe-4S] cluster serves as cofactor.

It localises to the cytoplasm. It catalyses the reaction [[Fe-S] cluster scaffold protein carrying a second [4Fe-4S](2+) cluster] + N(6)-octanoyl-L-lysyl-[protein] + 2 oxidized [2Fe-2S]-[ferredoxin] + 2 S-adenosyl-L-methionine + 4 H(+) = [[Fe-S] cluster scaffold protein] + N(6)-[(R)-dihydrolipoyl]-L-lysyl-[protein] + 4 Fe(3+) + 2 hydrogen sulfide + 2 5'-deoxyadenosine + 2 L-methionine + 2 reduced [2Fe-2S]-[ferredoxin]. The protein operates within protein modification; protein lipoylation via endogenous pathway; protein N(6)-(lipoyl)lysine from octanoyl-[acyl-carrier-protein]. Catalyzes the radical-mediated insertion of two sulfur atoms into the C-6 and C-8 positions of the octanoyl moiety bound to the lipoyl domains of lipoate-dependent enzymes, thereby converting the octanoylated domains into lipoylated derivatives. This is Lipoyl synthase from Staphylococcus aureus (strain bovine RF122 / ET3-1).